The primary structure comprises 128 residues: Small ribosomal subunit protein uS9 (128 aa).

Belongs to the universal ribosomal protein uS9 family. As to quaternary structure, part of the 30S ribosomal subunit. Contacts proteins S7 and S10.

Functionally, part of the top of the head of the 30S subunit. The C-terminal region penetrates the head emerging in the P-site where it contacts tRNA. This chain is Small ribosomal subunit protein uS9 (rpsI), found in Thermus thermophilus (strain ATCC BAA-163 / DSM 7039 / HB27).